Reading from the N-terminus, the 308-residue chain is Aspartate carbamoyltransferase catalytic subunit (308 aa).

Positions 57 and 58 each coordinate carbamoyl phosphate. Residue Lys86 participates in L-aspartate binding. Carbamoyl phosphate is bound by residues Arg107, His135, and Gln138. L-aspartate is bound by residues Arg168 and Arg229. Positions 268 and 269 each coordinate carbamoyl phosphate.

The protein belongs to the aspartate/ornithine carbamoyltransferase superfamily. ATCase family. In terms of assembly, heterooligomer of catalytic and regulatory chains.

It carries out the reaction carbamoyl phosphate + L-aspartate = N-carbamoyl-L-aspartate + phosphate + H(+). It functions in the pathway pyrimidine metabolism; UMP biosynthesis via de novo pathway; (S)-dihydroorotate from bicarbonate: step 2/3. Functionally, catalyzes the condensation of carbamoyl phosphate and aspartate to form carbamoyl aspartate and inorganic phosphate, the committed step in the de novo pyrimidine nucleotide biosynthesis pathway. The chain is Aspartate carbamoyltransferase catalytic subunit from Pyrococcus furiosus (strain ATCC 43587 / DSM 3638 / JCM 8422 / Vc1).